Consider the following 360-residue polypeptide: Phospho-N-acetylmuramoyl-pentapeptide-transferase (360 aa).

The next 10 helical transmembrane spans lie at A26–A46, P72–Y92, S94–V114, W132–G152, V168–G188, G199–T219, A236–F256, V263–L283, F288–V308, and V338–K358.

This sequence belongs to the glycosyltransferase 4 family. MraY subfamily. Mg(2+) is required as a cofactor.

It is found in the cell inner membrane. The enzyme catalyses UDP-N-acetyl-alpha-D-muramoyl-L-alanyl-gamma-D-glutamyl-meso-2,6-diaminopimeloyl-D-alanyl-D-alanine + di-trans,octa-cis-undecaprenyl phosphate = di-trans,octa-cis-undecaprenyl diphospho-N-acetyl-alpha-D-muramoyl-L-alanyl-D-glutamyl-meso-2,6-diaminopimeloyl-D-alanyl-D-alanine + UMP. Its pathway is cell wall biogenesis; peptidoglycan biosynthesis. Functionally, catalyzes the initial step of the lipid cycle reactions in the biosynthesis of the cell wall peptidoglycan: transfers peptidoglycan precursor phospho-MurNAc-pentapeptide from UDP-MurNAc-pentapeptide onto the lipid carrier undecaprenyl phosphate, yielding undecaprenyl-pyrophosphoryl-MurNAc-pentapeptide, known as lipid I. The protein is Phospho-N-acetylmuramoyl-pentapeptide-transferase of Enterobacter sp. (strain 638).